A 234-amino-acid polypeptide reads, in one-letter code: Leucyl/phenylalanyl-tRNA--protein transferase (234 aa).

The protein belongs to the L/F-transferase family.

The protein resides in the cytoplasm. It carries out the reaction N-terminal L-lysyl-[protein] + L-leucyl-tRNA(Leu) = N-terminal L-leucyl-L-lysyl-[protein] + tRNA(Leu) + H(+). It catalyses the reaction N-terminal L-arginyl-[protein] + L-leucyl-tRNA(Leu) = N-terminal L-leucyl-L-arginyl-[protein] + tRNA(Leu) + H(+). The catalysed reaction is L-phenylalanyl-tRNA(Phe) + an N-terminal L-alpha-aminoacyl-[protein] = an N-terminal L-phenylalanyl-L-alpha-aminoacyl-[protein] + tRNA(Phe). Its function is as follows. Functions in the N-end rule pathway of protein degradation where it conjugates Leu, Phe and, less efficiently, Met from aminoacyl-tRNAs to the N-termini of proteins containing an N-terminal arginine or lysine. The chain is Leucyl/phenylalanyl-tRNA--protein transferase from Myxococcus xanthus (strain DK1622).